Consider the following 393-residue polypeptide: Actin-related protein 2 (393 aa).

ATP contacts are provided by residues 158 to 160, 212 to 216, and 303 to 308; these read GDG, RQMKE, and GGTTMY.

It belongs to the actin family. ARP2 subfamily. Component of the Arp2/3 complex.

The protein localises to the cytoplasm. It localises to the cytoskeleton. Its function is as follows. Functions as ATP-binding component of the Arp2/3 complex which is involved in regulation of actin polymerization and together with an activating nucleation-promoting factor (NPF) mediates the formation of branched actin networks. Seems to contact the pointed end of the daughter actin filament. The chain is Actin-related protein 2 (arx-2) from Caenorhabditis briggsae.